A 431-amino-acid polypeptide reads, in one-letter code: Histidine--tRNA ligase (431 aa).

The protein belongs to the class-II aminoacyl-tRNA synthetase family. In terms of assembly, homodimer.

The protein resides in the cytoplasm. It catalyses the reaction tRNA(His) + L-histidine + ATP = L-histidyl-tRNA(His) + AMP + diphosphate + H(+). The protein is Histidine--tRNA ligase of Levilactobacillus brevis (strain ATCC 367 / BCRC 12310 / CIP 105137 / JCM 1170 / LMG 11437 / NCIMB 947 / NCTC 947) (Lactobacillus brevis).